The sequence spans 217 residues: Oxygen-insensitive NAD(P)H nitroreductase (217 aa).

Residue 10–14 (RYSTK) participates in FMN binding. NAD(+) contacts are provided by lysine 14, threonine 41, asparagine 71, lysine 74, and arginine 107. Asparagine 71 is a binding site for FMN. FMN contacts are provided by residues 165–166 (EG) and 205–207 (KSR).

The protein belongs to the nitroreductase family. Homodimer. The cofactor is FMN.

Its function is as follows. Reduction of a variety of nitroaromatic compounds using NADH (and to lesser extent NADPH) as source of reducing equivalents; two electrons are transferred. Capable of reducing nitrofurazone. This Salmonella typhimurium (strain LT2 / SGSC1412 / ATCC 700720) protein is Oxygen-insensitive NAD(P)H nitroreductase.